Consider the following 204-residue polypeptide: Ras-related protein Rab-7L1 (204 aa).

Residues Ser-33, Lys-34, His-35, Tyr-36, Lys-37, and Thr-39 each contribute to the GTP site. Residues 36–44 (YKSTVGVDF) carry the Effector region motif. Residue Thr-71 is modified to Phosphothreonine; by LRRK2. Ser-72 bears the Phosphoserine mark. 3 residues coordinate GTP: Lys-126, Val-156, and Lys-157. Residues Cys-203 and Cys-204 are each lipidated (S-geranylgeranyl cysteine).

The protein belongs to the small GTPase superfamily. Rab family. Interacts with LRRK2 (via the N-terminus); this interaction is direct and stimulates kinase activity.

It is found in the cell membrane. Its subcellular location is the cytoplasm. The protein localises to the perinuclear region. It localises to the golgi apparatus. The protein resides in the golgi apparatus membrane. It is found in the trans-Golgi network. Its subcellular location is the cytoskeleton. The small GTPases Rab are key regulators in vesicle trafficking. Essential for maintaining the integrity of endosome-trans-Golgi network structure. Together with LRRK2, plays a role in the retrograde trafficking pathway for recycling proteins, such as mannose 6 phosphate receptor (M6PR), between lysosomes and the Golgi apparatus in a retromer-dependent manner. Recruits LRRK2 to the Golgi apparatus and stimulates LRRK2 kinase activity. Stimulates phosphorylation of RAB10 'Thr-73' by LRRK2. Also regulates neuronal process morphology in the intact central nervous system (CNS). This Mus musculus (Mouse) protein is Ras-related protein Rab-7L1 (Rab29).